The following is a 122-amino-acid chain: Large ribosomal subunit protein uL14 (122 aa).

The protein belongs to the universal ribosomal protein uL14 family. As to quaternary structure, part of the 50S ribosomal subunit. Forms a cluster with proteins L3 and L19. In the 70S ribosome, L14 and L19 interact and together make contacts with the 16S rRNA in bridges B5 and B8.

In terms of biological role, binds to 23S rRNA. Forms part of two intersubunit bridges in the 70S ribosome. The sequence is that of Large ribosomal subunit protein uL14 from Thermotoga maritima (strain ATCC 43589 / DSM 3109 / JCM 10099 / NBRC 100826 / MSB8).